The sequence spans 88 residues: Small ribosomal subunit protein bS20 (88 aa).

Residues 1–23 (MANTSSAKKATRKIARRAAINKN) form a disordered region.

The protein belongs to the bacterial ribosomal protein bS20 family.

Its function is as follows. Binds directly to 16S ribosomal RNA. This is Small ribosomal subunit protein bS20 from Mesorhizobium japonicum (strain LMG 29417 / CECT 9101 / MAFF 303099) (Mesorhizobium loti (strain MAFF 303099)).